The chain runs to 628 residues: Carbon monoxide dehydrogenase 1 (628 aa).

Residues cysteine 44, cysteine 52, cysteine 53, cysteine 56, cysteine 61, and cysteine 75 each contribute to the [4Fe-4S] cluster site. Histidine 266, cysteine 302, cysteine 340, cysteine 448, cysteine 478, and cysteine 519 together coordinate [Ni-4Fe-5S] cluster.

This sequence belongs to the Ni-containing carbon monoxide dehydrogenase family. Homodimer. The cofactor is [4Fe-4S] cluster. [Ni-4Fe-5S] cluster is required as a cofactor.

It catalyses the reaction CO + 2 oxidized [2Fe-2S]-[ferredoxin] + H2O = 2 reduced [2Fe-2S]-[ferredoxin] + CO2 + 2 H(+). Its function is as follows. CODH oxidizes carbon monoxide coupled, via CooF, to the reduction of a hydrogen cation by a hydrogenase (possibly CooH). This chain is Carbon monoxide dehydrogenase 1 (cooS1), found in Methanosarcina mazei (strain ATCC BAA-159 / DSM 3647 / Goe1 / Go1 / JCM 11833 / OCM 88) (Methanosarcina frisia).